A 457-amino-acid chain; its full sequence is GTPase Der (457 aa).

EngA-type G domains are found at residues proline 4–asparagine 169 and isoleucine 177–arginine 352. Residues glycine 10–serine 17, aspartate 57–leucine 61, asparagine 120–glutamate 123, glycine 183–serine 190, aspartate 230–isoleucine 234, and asparagine 295–aspartate 298 each bind GTP. Positions arginine 353–glutamine 438 constitute a KH-like domain.

This sequence belongs to the TRAFAC class TrmE-Era-EngA-EngB-Septin-like GTPase superfamily. EngA (Der) GTPase family. Associates with the 50S ribosomal subunit.

GTPase that plays an essential role in the late steps of ribosome biogenesis. In Prochlorococcus marinus (strain MIT 9215), this protein is GTPase Der.